Reading from the N-terminus, the 286-residue chain is Lipoyl synthase (286 aa).

Cys-29, Cys-34, Cys-40, Cys-55, Cys-59, Cys-62, and Ser-265 together coordinate [4Fe-4S] cluster. Residues 41-254 (WGSGTATFMI…EKIAYSLGFS (214 aa)) form the Radical SAM core domain.

It belongs to the radical SAM superfamily. Lipoyl synthase family. [4Fe-4S] cluster serves as cofactor.

The protein resides in the cytoplasm. The enzyme catalyses [[Fe-S] cluster scaffold protein carrying a second [4Fe-4S](2+) cluster] + N(6)-octanoyl-L-lysyl-[protein] + 2 oxidized [2Fe-2S]-[ferredoxin] + 2 S-adenosyl-L-methionine + 4 H(+) = [[Fe-S] cluster scaffold protein] + N(6)-[(R)-dihydrolipoyl]-L-lysyl-[protein] + 4 Fe(3+) + 2 hydrogen sulfide + 2 5'-deoxyadenosine + 2 L-methionine + 2 reduced [2Fe-2S]-[ferredoxin]. The protein operates within protein modification; protein lipoylation via endogenous pathway; protein N(6)-(lipoyl)lysine from octanoyl-[acyl-carrier-protein]: step 2/2. In terms of biological role, catalyzes the radical-mediated insertion of two sulfur atoms into the C-6 and C-8 positions of the octanoyl moiety bound to the lipoyl domains of lipoate-dependent enzymes, thereby converting the octanoylated domains into lipoylated derivatives. In Sulfolobus acidocaldarius (strain ATCC 33909 / DSM 639 / JCM 8929 / NBRC 15157 / NCIMB 11770), this protein is Lipoyl synthase.